The chain runs to 110 residues: MSQGVEFNRLMLDMRAMQADAMSLPKATAAPELAEGQSSFADMLGQAIGKVHQTQQASTQLANAFEIGKSGVDLTDVMIASQKASVSMQALTQVRNKLVQAYQDIMQMPV.

Belongs to the FliE family.

Its subcellular location is the bacterial flagellum basal body. The polypeptide is Flagellar hook-basal body complex protein FliE (Pseudomonas putida (strain W619)).